The chain runs to 198 residues: Ribonuclease HII (198 aa).

Residues 10–198 (HLVAGVDEVG…PVKRALGLVS (189 aa)) form the RNase H type-2 domain. Asp16, Glu17, and Asp108 together coordinate a divalent metal cation.

Belongs to the RNase HII family. It depends on Mn(2+) as a cofactor. Mg(2+) serves as cofactor.

The protein resides in the cytoplasm. The catalysed reaction is Endonucleolytic cleavage to 5'-phosphomonoester.. Endonuclease that specifically degrades the RNA of RNA-DNA hybrids. This Salmonella paratyphi A (strain AKU_12601) protein is Ribonuclease HII.